The chain runs to 447 residues: MREIVHLQTGQCGNQIGAAFWQTISGEHGLDGSGVYNGTSDLQLERMNVYFNEASGNKYVPRAVLVDLEPGTMDAVRAGPFGQLFRPDNFVFGQSGAGNNWAKGHYTEGAELVDQVLDVVRREAEACDCLQGFQITHSLGGGTGAGMGTLLISKIREEFPDRMMATFSVVPSPKVSDTVVEPYNATLSVHQLVENSDETFCIDNEALYEICMRTLKLSNPSYGDLNHLVSAVMSGVTTCLRFPGQLNSDLRKLAVNMVPFPRLHFFMVGFAPLTSRGAHSFRAVTVPELTQQMYDPKNMMAASDFRNGRYLTCSAIFRGKVSMKEVEDQMRNVQNKNSAYFVEWIPNNVQTALCSIPPRGLKMSSTFVGNSTSIQELFKRVGDQFTAMFRRKAFLHWYTGEGMDEMEFTEAESNMNDLVHEYQQYQDASISEGEEEYEEEQQLENEE.

GTP is bound by residues Q11, E69, S138, G142, T143, G144, N204, and N226. E69 contacts Mg(2+). A disordered region spans residues 427–447; the sequence is DASISEGEEEYEEEQQLENEE. Residues 432–447 show a composition bias toward acidic residues; sequence EGEEEYEEEQQLENEE.

This sequence belongs to the tubulin family. In terms of assembly, dimer of alpha and beta chains. A typical microtubule is a hollow water-filled tube with an outer diameter of 25 nm and an inner diameter of 15 nM. Alpha-beta heterodimers associate head-to-tail to form protofilaments running lengthwise along the microtubule wall with the beta-tubulin subunit facing the microtubule plus end conferring a structural polarity. Microtubules usually have 13 protofilaments but different protofilament numbers can be found in some organisms and specialized cells. The cofactor is Mg(2+).

It is found in the cytoplasm. Its subcellular location is the cytoskeleton. In terms of biological role, tubulin is the major constituent of microtubules, a cylinder consisting of laterally associated linear protofilaments composed of alpha- and beta-tubulin heterodimers. Microtubules grow by the addition of GTP-tubulin dimers to the microtubule end, where a stabilizing cap forms. Below the cap, tubulin dimers are in GDP-bound state, owing to GTPase activity of alpha-tubulin. This Erysiphe pisi (Pea powdery mildew) protein is Tubulin beta-2 chain (TUB2).